Here is a 270-residue protein sequence, read N- to C-terminus: MSTPTSNIPDVQNSADTRHIAINKVGIKSIRHPIKVQDKSAGIQHTIAMFNMYVGLPHNFKGTHMSRFVEILNSHEREISVENFPTMLRDMVVKLEAETGHIEMNFPYFINKTAPVSGVQSLMDYDVTFIGDICHGEIATSVKVVVPVTSLCPCSKKISEYGAHNQRSHVTVTAKTNDFMWIEEIVQLVEQEASCELFGLLKRPDEKYVTERAYDNPKFVEDMVRDVAARLNAEARVDAYVVESENFESIHNHSAYALIENDKKNPLAHA.

It belongs to the GTP cyclohydrolase IV family.

The catalysed reaction is GTP + H2O = 7,8-dihydroneopterin 3'-triphosphate + formate + H(+). It functions in the pathway cofactor biosynthesis; 7,8-dihydroneopterin triphosphate biosynthesis; 7,8-dihydroneopterin triphosphate from GTP: step 1/1. In terms of biological role, converts GTP to 7,8-dihydroneopterin triphosphate. In Dechloromonas aromatica (strain RCB), this protein is GTP cyclohydrolase FolE2 2.